A 724-amino-acid polypeptide reads, in one-letter code: Methionine--tRNA ligase (724 aa).

The 'HIGH' region motif lies at 11-21 (PYANGPIHAGH). Zn(2+) contacts are provided by cysteine 143, cysteine 146, cysteine 156, and cysteine 159. The 'KMSKS' region signature appears at 344-348 (KFSTS). Residue threonine 347 participates in ATP binding. In terms of domain architecture, tRNA-binding spans 624 to 724 (EFSKIDLRIG…KEVKLGAKVR (101 aa)).

The protein belongs to the class-I aminoacyl-tRNA synthetase family. MetG type 1 subfamily. In terms of assembly, homodimer. The cofactor is Zn(2+).

The protein localises to the cytoplasm. It carries out the reaction tRNA(Met) + L-methionine + ATP = L-methionyl-tRNA(Met) + AMP + diphosphate. Functionally, is required not only for elongation of protein synthesis but also for the initiation of all mRNA translation through initiator tRNA(fMet) aminoacylation. In Pyrococcus furiosus (strain ATCC 43587 / DSM 3638 / JCM 8422 / Vc1), this protein is Methionine--tRNA ligase.